The chain runs to 111 residues: Microtubule nucleation factor SSNA1 (111 aa).

A coiled-coil region spans residues Q6 to Y71.

It belongs to the SSNA1 family. As to quaternary structure, self-assembles into fibrils in a head-to-tail fashion.

The protein localises to the cytoplasm. It is found in the cytoskeleton. Its subcellular location is the flagellum basal body. The protein resides in the flagellum axoneme. Microtubule-binding protein which stabilizes dynamic microtubules by slowing growth and shrinkage at both plus and minus ends and serves as a sensor of microtubule damage. Induces microtubule branching which is mediated by the formation of long SSNA1 fibrils which guide microtubule protofilaments to split apart from the mother microtubule and form daughter microtubules. Required for cell division. The polypeptide is Microtubule nucleation factor SSNA1 (Chlamydomonas reinhardtii (Chlamydomonas smithii)).